Here is a 152-residue protein sequence, read N- to C-terminus: Regulatory protein RecX (152 aa).

The protein belongs to the RecX family.

It is found in the cytoplasm. Its function is as follows. Modulates RecA activity. The polypeptide is Regulatory protein RecX (Haemophilus influenzae (strain 86-028NP)).